The chain runs to 144 residues: uncharacterized protein (144 aa).

An N-terminal signal peptide occupies residues 1–22; the sequence is MCTDVAFFSLDCLATWLGGVCS.

This is an uncharacterized protein from Saccharomyces cerevisiae (strain ATCC 204508 / S288c) (Baker's yeast).